The chain runs to 345 residues: Phosphate acyltransferase (345 aa).

The protein belongs to the PlsX family. Homodimer. Probably interacts with PlsY.

It localises to the cytoplasm. It carries out the reaction a fatty acyl-[ACP] + phosphate = an acyl phosphate + holo-[ACP]. It functions in the pathway lipid metabolism; phospholipid metabolism. Functionally, catalyzes the reversible formation of acyl-phosphate (acyl-PO(4)) from acyl-[acyl-carrier-protein] (acyl-ACP). This enzyme utilizes acyl-ACP as fatty acyl donor, but not acyl-CoA. This Photorhabdus laumondii subsp. laumondii (strain DSM 15139 / CIP 105565 / TT01) (Photorhabdus luminescens subsp. laumondii) protein is Phosphate acyltransferase.